Consider the following 103-residue polypeptide: Auxin-responsive protein SAUR50 (103 aa).

It belongs to the ARG7 family.

In terms of biological role, effector of hormonal and environmental signals in plant growth. Involved in heliotropism. The polypeptide is Auxin-responsive protein SAUR50 (Helianthus annuus (Common sunflower)).